Here is a 278-residue protein sequence, read N- to C-terminus: Large ribosomal subunit protein uL2 (278 aa).

The tract at residues 201-278 (HGNINDGKAG…IMRSRHQRKK (78 aa)) is disordered. Basic residues predominate over residues 210–221 (GRSRWRGKRPHV).

Belongs to the universal ribosomal protein uL2 family. In terms of assembly, part of the 50S ribosomal subunit. Forms a bridge to the 30S subunit in the 70S ribosome.

One of the primary rRNA binding proteins. Required for association of the 30S and 50S subunits to form the 70S ribosome, for tRNA binding and peptide bond formation. It has been suggested to have peptidyltransferase activity; this is somewhat controversial. Makes several contacts with the 16S rRNA in the 70S ribosome. The polypeptide is Large ribosomal subunit protein uL2 (Rhizobium meliloti (strain 1021) (Ensifer meliloti)).